The sequence spans 530 residues: AarF domain-containing protein kinase 1 (530 aa).

The Protein kinase domain occupies 155 to 467; sequence SFDDTPLGTA…ASSFLNMSRC (313 aa). Residues 161 to 169 and K183 contribute to the ATP site; that span reads LGTASLAQV. D315 serves as the catalytic Proton acceptor.

Belongs to the protein kinase superfamily. ADCK protein kinase family.

It localises to the mitochondrion. Appears to be essential for maintaining mitochondrial cristae formation and mitochondrial function by acting via YME1L1 in a kinase-independent manner to regulate essential mitochondrial structural proteins OPA1 and IMMT. The action of this enzyme is not yet clear. It is not known if it has protein kinase activity and what type of substrate it would phosphorylate (Ser, Thr or Tyr). This is AarF domain-containing protein kinase 1 from Homo sapiens (Human).